The sequence spans 94 residues: Pyrimidine/purine nucleoside phosphorylase (94 aa).

Belongs to the nucleoside phosphorylase PpnP family.

It catalyses the reaction a purine D-ribonucleoside + phosphate = a purine nucleobase + alpha-D-ribose 1-phosphate. The catalysed reaction is adenosine + phosphate = alpha-D-ribose 1-phosphate + adenine. The enzyme catalyses cytidine + phosphate = cytosine + alpha-D-ribose 1-phosphate. It carries out the reaction guanosine + phosphate = alpha-D-ribose 1-phosphate + guanine. It catalyses the reaction inosine + phosphate = alpha-D-ribose 1-phosphate + hypoxanthine. The catalysed reaction is thymidine + phosphate = 2-deoxy-alpha-D-ribose 1-phosphate + thymine. The enzyme catalyses uridine + phosphate = alpha-D-ribose 1-phosphate + uracil. It carries out the reaction xanthosine + phosphate = alpha-D-ribose 1-phosphate + xanthine. In terms of biological role, catalyzes the phosphorolysis of diverse nucleosides, yielding D-ribose 1-phosphate and the respective free bases. Can use uridine, adenosine, guanosine, cytidine, thymidine, inosine and xanthosine as substrates. Also catalyzes the reverse reactions. The sequence is that of Pyrimidine/purine nucleoside phosphorylase from Pseudomonas fluorescens (strain Pf0-1).